A 310-amino-acid polypeptide reads, in one-letter code: Olfactory receptor 5P80 (310 aa).

Residues 1-25 (MEPGNYTVVTEVILLGFTEDAIIRA) are Extracellular-facing. The N-linked (GlcNAc...) asparagine glycan is linked to Asn-5. A helical transmembrane segment spans residues 26–46 (ILFIVFLIIYSVTLMGNASII). Over 47-54 (MLIRRSPQ) the chain is Cytoplasmic. Residues 55–75 (LHTPMYLLLSHLAFVDIGYSS) traverse the membrane as a helical segment. The Extracellular portion of the chain corresponds to 76 to 99 (SVTPIMLKGFLRKETFILVSGCVA). A disulfide bond links Cys-97 and Cys-189. The helical transmembrane segment at 100–120 (QLCSVVTFGSTECFLLAAMAY) threads the bilayer. Residues 121–133 (DRYVAICSPLLYA) lie on the Cytoplasmic side of the membrane. Residues 134-154 (TQMSSTVCILLVGASYLGGCV) traverse the membrane as a helical segment. At 155-196 (NAWTFTGCLLNLSFCRPNKVNHFFCDYSPLLKISCSHDFSSE) the chain is on the extracellular side. N-linked (GlcNAc...) asparagine glycosylation occurs at Asn-165. The helical transmembrane segment at 197–217 (VIPAISSGSIIVVTVFIIALS) threads the bilayer. The Cytoplasmic portion of the chain corresponds to 218-237 (YVYILVSILKMRSTEGRQKA). The chain crosses the membrane as a helical span at residues 238 to 258 (FSTCTSHLTAVTLFYGTITFI). The Extracellular portion of the chain corresponds to 259–271 (YVMPKSSYSTDQN). Residues 272-292 (KVVSVFYTVVIPMLNPIIYSL) form a helical membrane-spanning segment. The Cytoplasmic segment spans residues 293 to 310 (RNKDVKEAMKKLMANTHH).

Belongs to the G-protein coupled receptor 1 family.

It localises to the cell membrane. Functionally, potential odorant receptor. This Mus musculus (Mouse) protein is Olfactory receptor 5P80.